A 537-amino-acid polypeptide reads, in one-letter code: Intercellular adhesion molecule 1 (537 aa).

The signal sequence occupies residues 1 to 27 (MASTRAKPTLPLLLALVTVVIPGPGDA). Topologically, residues 28–485 (QVSIHPREAF…LTVLYHSQNN (458 aa)) are extracellular. Ig-like C2-type domains lie at 41-102 (GGSV…QSSA) and 127-195 (GKDL…LDLR). Residue asparagine 47 is glycosylated (N-linked (GlcNAc...) asparagine). Cystine bridges form between cysteine 48-cysteine 91, cysteine 52-cysteine 95, and cysteine 134-cysteine 188. The short motif at 151–153 (RGE) is the Cell attachment site; atypical element. The Cell attachment site motif lies at 179 to 181 (RGD). Residues asparagine 185, asparagine 204, asparagine 267, asparagine 311, asparagine 362, asparagine 388, asparagine 409, asparagine 456, and asparagine 469 are each glycosylated (N-linked (GlcNAc...) asparagine). The Ig-like C2-type 3 domain occupies 232–299 (GTQQKLFCSL…LRCVLELADQ (68 aa)). Cysteine 239 and cysteine 292 are oxidised to a cystine. The Ig-like C2-type 4 domain occupies 327–381 (GSQVTVKCEAHSGSKVVLLSGVEPRPPTPQVQFTLNASSEDHKRSFFCSAALEVA). Cysteine 334 and cysteine 374 are disulfide-bonded. 3 disulfide bridges follow: cysteine 406/cysteine 422, cysteine 422/cysteine 461, and cysteine 434/cysteine 461. The Ig-like C2-type 5 domain maps to 415-468 (GSQQTLKCQAWGNPSPKMTCRRKADGALLPIGVVKSVKQEMNGTYVCHAFSSHG). Residues 486–509 (WTIIILVPVLLVIVGLVMAASYVY) form a helical membrane-spanning segment. At 510 to 537 (NRQRKIRIYKLQKAQEEAIKLKGQAPPP) the chain is on the cytoplasmic side.

This sequence belongs to the immunoglobulin superfamily. ICAM family. As to quaternary structure, homodimer. Interacts with MUC1 and promotes cell aggregation in epithelial cells. Interacts with ARHGEF26/SGEF. Interacts (on T cell side) with CD81, CD247 and CD9 at immunological synapses between antigen-presenting cells and T cells. Monoubiquitinated, which is promoted by MARCH9 and leads to endocytosis. In terms of tissue distribution, expressed at low level on a subpopulation of lymphocytes, macrophages, and endothelial cells, but is strongly induced on these cells, and on fibroblasts and epithelial cells.

The protein localises to the membrane. ICAM proteins are ligands for the leukocyte adhesion protein LFA-1 (integrin alpha-L/beta-2). During leukocyte trans-endothelial migration, ICAM1 engagement promotes the assembly of endothelial apical cups through ARHGEF26/SGEF and RHOG activation. The sequence is that of Intercellular adhesion molecule 1 (Icam1) from Mus musculus (Mouse).